The sequence spans 235 residues: Large ribosomal subunit protein uL1 (235 aa).

Belongs to the universal ribosomal protein uL1 family. Part of the 50S ribosomal subunit.

Its function is as follows. Binds directly to 23S rRNA. The L1 stalk is quite mobile in the ribosome, and is involved in E site tRNA release. Functionally, protein L1 is also a translational repressor protein, it controls the translation of the L11 operon by binding to its mRNA. This is Large ribosomal subunit protein uL1 from Citrobacter koseri (strain ATCC BAA-895 / CDC 4225-83 / SGSC4696).